The following is a 593-amino-acid chain: Dolichyl-phosphooligosaccharide-protein glycotransferase 2 (593 aa).

Residues 1–12 (MTPVGMDRKSLS) are Cytoplasmic-facing. Residues 13–33 (LLILIVLLGLCIRLQNFGEIF) form a helical membrane-spanning segment. Over 34–98 (DSRIYYYGYD…GLFLGFWASE (65 aa)) the chain is Extracellular. Residues 41–43 (GYD) carry the DXD motif 1 motif. Residue Asp-43 coordinates Mn(2+). The chain crosses the membrane as a helical span at residues 99-119 (IFAVVFPVIIGVLCIVLVYLI). Over 120–128 (SLEVLRNEK) the chain is Cytoplasmic. The helical transmembrane segment at 129–149 (FALISAFIFSVCPVTVWKSLL) threads the bilayer. The Extracellular segment spans residues 150 to 154 (GKADH). Asp-153 is a binding site for Mn(2+). A DXD motif 2 motif is present at residues 153–155 (DHH). His-154 provides a ligand contact to a glycophospholipid. His-155 contacts Mn(2+). The chain crosses the membrane as a helical span at residues 155 to 175 (HIWVVFLLLLSIWLVTKPGLL). Topologically, residues 176-180 (KLLSG) are cytoplasmic. A helical membrane pass occupies residues 181-201 (IPMLLMALSWLGAPIYAALLA). Residues 202–229 (VSSLFQFNEKEVRIVGISNLIPVLSSIQ) are Extracellular-facing. Residues 230–250 (NLFLGFSFLAIAVFLLVGSFV) form a helical membrane-spanning segment. The Cytoplasmic segment spans residues 251-265 (KRFERRFRYAIVYYL). Residues 266–286 (CICSVALLSAYLMPVGWLGFV) form a helical membrane-spanning segment. Topologically, residues 287 to 310 (KSGISYVLGTDIYLPTIREARSFQ) are extracellular. The TIXE motif motif lies at 302 to 305 (TIRE). A helical membrane pass occupies residues 311 to 331 (ILGVISSAGYLFFVLAIPALF). Met-332 is a topological domain (cytoplasmic). Residues 333 to 353 (LRNGFLKVFFVLSFLISILQL) form a helical membrane-spanning segment. Residue Arg-354 is a topological domain, extracellular. Arg-354 serves as a coordination point for a glycophospholipid. A helical membrane pass occupies residues 355 to 375 (FVEVLAFPVAILASYTICQIL). Residues 376–411 (ERVDYPVFRKEEEGESKRRGRKEKKKAVEIRKKDHA) are Cytoplasmic-facing. Residues 412–432 (TVIAFLLFLALPCFANSLAPV) traverse the membrane as a helical segment. At 433 to 593 (EMTMDWKEAL…FGTVKIFEVK (161 aa)) the chain is on the extracellular side. The tract at residues 468–470 (WWD) is interacts with target acceptor peptide in protein substrate. A WWDYG motif motif is present at residues 468 to 472 (WWDYG). The short motif at 524–539 (ELTVKPETNKTKFIPI) is the DKi motif element.

This sequence belongs to the STT3 family. Mn(2+) is required as a cofactor. Mg(2+) serves as cofactor. It depends on Zn(2+) as a cofactor.

Its subcellular location is the cell membrane. It carries out the reaction an archaeal dolichyl phosphooligosaccharide + [protein]-L-asparagine = an archaeal dolichyl phosphate + a glycoprotein with the oligosaccharide chain attached by N-beta-D-glycosyl linkage to a protein L-asparagine.. It participates in protein modification; protein glycosylation. Oligosaccharyl transferase (OST) that catalyzes the initial transfer of a defined glycan (a GalNAc-linked heptasaccharide composed of 4 Hex, 3 dHex and a sulfate for A.fulgidus AglB-S) from the lipid carrier dolichol-monophosphate to an asparagine residue within an Asn-X-Ser/Thr consensus motif in nascent polypeptide chains, the first step in protein N-glycosylation. The polypeptide is Dolichyl-phosphooligosaccharide-protein glycotransferase 2 (aglB2) (Archaeoglobus fulgidus (strain ATCC 49558 / DSM 4304 / JCM 9628 / NBRC 100126 / VC-16)).